Consider the following 77-residue polypeptide: Conotoxin Lt7.1 (77 aa).

Positions 1-19 (MEKLTILLLVAALLMSTQG) are cleaved as a signal peptide. Residues 20 to 49 (LIQSGGENRPKEKIKFLSKRKTVAESWWEG) constitute a propeptide that is removed on maturation. Disulfide bonds link Cys-51-Cys-65, Cys-58-Cys-69, and Cys-64-Cys-74.

It belongs to the conotoxin O2 superfamily. Expressed by the venom duct.

It is found in the secreted. This Conus litteratus (Lettered cone) protein is Conotoxin Lt7.1.